The following is a 230-amino-acid chain: MRVPQTIAIDGQSAAGKSTLGALLAEALGYLYFDTGVMYRALALAALRAGIDPDDEAALSELAHQLVIDVTQPTVADGRQYTVLVNGEDVTWAIRSPEVERIVSRAARFPSVRREMVRQQQLIGQRGRVVMVGRDIGTVVMPNADLKIYLQASLAERARRRAAELRSRNIDMPLEQIAAALAERDALDAHVSQPAADAIILVNDGLTPAEEVALVLNRFVYSEQALENGH.

Residue 11-19 coordinates ATP; the sequence is GQSAAGKST.

Belongs to the cytidylate kinase family. Type 1 subfamily.

The protein resides in the cytoplasm. It carries out the reaction CMP + ATP = CDP + ADP. The enzyme catalyses dCMP + ATP = dCDP + ADP. The protein is Cytidylate kinase of Chloroflexus aggregans (strain MD-66 / DSM 9485).